Consider the following 94-residue polypeptide: DNA-directed RNA polymerase subunit omega (94 aa).

It belongs to the RNA polymerase subunit omega family. Consists of a sigma factor and the RNAP core enzyme which is composed of 2 alpha chains, 1 beta chain, 1 beta' chain and 1 subunit omega.

The enzyme catalyses RNA(n) + a ribonucleoside 5'-triphosphate = RNA(n+1) + diphosphate. In terms of biological role, promotes RNA polymerase assembly. Latches the N- and C-terminal regions of the beta' subunit thereby facilitating its interaction with the beta and alpha subunits. This Shewanella violacea (strain JCM 10179 / CIP 106290 / LMG 19151 / DSS12) protein is DNA-directed RNA polymerase subunit omega.